The sequence spans 248 residues: 2,3-bisphosphoglycerate-dependent phosphoglycerate mutase (248 aa).

Substrate contacts are provided by residues 10 to 17 (RHGQSQWN), 23 to 24 (TG), R62, 89 to 92 (ERHY), K100, 116 to 117 (RR), and 183 to 184 (GN). The active-site Tele-phosphohistidine intermediate is H11. E89 functions as the Proton donor/acceptor in the catalytic mechanism.

This sequence belongs to the phosphoglycerate mutase family. BPG-dependent PGAM subfamily.

The enzyme catalyses (2R)-2-phosphoglycerate = (2R)-3-phosphoglycerate. Its pathway is carbohydrate degradation; glycolysis; pyruvate from D-glyceraldehyde 3-phosphate: step 3/5. In terms of biological role, catalyzes the interconversion of 2-phosphoglycerate and 3-phosphoglycerate. The chain is 2,3-bisphosphoglycerate-dependent phosphoglycerate mutase from Corynebacterium kroppenstedtii (strain DSM 44385 / JCM 11950 / CIP 105744 / CCUG 35717).